A 44-amino-acid chain; its full sequence is Small ribosomal subunit protein eS31 (44 aa).

Residues Cys18, Cys21, Cys35, and Cys38 each contribute to the Zn(2+) site. The C4-type zinc finger occupies 18-38 (CPRCGDTFLAAHDDRQVCGRC).

Belongs to the eukaryotic ribosomal protein eS31 family. In terms of assembly, part of the 30S ribosomal subunit. It depends on Zn(2+) as a cofactor.

The sequence is that of Small ribosomal subunit protein eS31 from Halobacterium salinarum (strain ATCC 29341 / DSM 671 / R1).